A 570-amino-acid polypeptide reads, in one-letter code: Hydroxylamine reductase (570 aa).

Residues Cys-5, Cys-8, Cys-17, and Cys-23 each contribute to the [4Fe-4S] cluster site. His-266, Glu-290, Cys-334, Cys-425, Cys-453, Cys-478, Glu-513, and Lys-515 together coordinate hybrid [4Fe-2O-2S] cluster. Residue Cys-425 is modified to Cysteine persulfide.

Belongs to the HCP family. Requires [4Fe-4S] cluster as cofactor. Hybrid [4Fe-2O-2S] cluster is required as a cofactor.

The protein localises to the cytoplasm. It catalyses the reaction A + NH4(+) + H2O = hydroxylamine + AH2 + H(+). Its function is as follows. Catalyzes the reduction of hydroxylamine to form NH(3) and H(2)O. The protein is Hydroxylamine reductase of Clostridium botulinum (strain ATCC 19397 / Type A).